The chain runs to 152 residues: Ribosome maturation factor RimP (152 aa).

Belongs to the RimP family.

Its subcellular location is the cytoplasm. Its function is as follows. Required for maturation of 30S ribosomal subunits. This chain is Ribosome maturation factor RimP, found in Shigella boydii serotype 4 (strain Sb227).